We begin with the raw amino-acid sequence, 122 residues long: MWRNSQKWKNRASRRPQRKGEALIDKLWIFRGLDRGRMTKKTLLMHELIGLKVKVVKSSHPGLIGIEGYVIDETKNTLTILGTKVWAIPKIVAEFEFEVGDKKIRIKGEELVGRPEMRLKKR.

Belongs to the eukaryotic/archaeal RNase P protein component 1 family. Consists of a catalytic RNA component and at least 4-5 protein subunits.

It is found in the cytoplasm. It carries out the reaction Endonucleolytic cleavage of RNA, removing 5'-extranucleotides from tRNA precursor.. Its function is as follows. Part of ribonuclease P, a protein complex that generates mature tRNA molecules by cleaving their 5'-ends. The sequence is that of Ribonuclease P protein component 1 from Thermococcus sibiricus (strain DSM 12597 / MM 739).